The sequence spans 395 residues: Argininosuccinate synthase (395 aa).

Residue 7–15 (LYSGGLDTS) participates in ATP binding. L-citrulline is bound at residue Tyr83. Residue Gly113 participates in ATP binding. L-aspartate contacts are provided by Thr115, Asn119, and Asp120. L-citrulline is bound at residue Asn119. L-citrulline-binding residues include Arg123, Ser169, Ser178, Glu253, and Tyr265.

It belongs to the argininosuccinate synthase family. Type 1 subfamily. As to quaternary structure, homotetramer.

It localises to the cytoplasm. It carries out the reaction L-citrulline + L-aspartate + ATP = 2-(N(omega)-L-arginino)succinate + AMP + diphosphate + H(+). It participates in amino-acid biosynthesis; L-arginine biosynthesis; L-arginine from L-ornithine and carbamoyl phosphate: step 2/3. The protein is Argininosuccinate synthase of Picrophilus torridus (strain ATCC 700027 / DSM 9790 / JCM 10055 / NBRC 100828 / KAW 2/3).